Here is a 294-residue protein sequence, read N- to C-terminus: Elongation factor Ts (294 aa).

Residues 79–82 (TDFV) form an involved in Mg(2+) ion dislocation from EF-Tu region.

This sequence belongs to the EF-Ts family.

The protein resides in the cytoplasm. Its function is as follows. Associates with the EF-Tu.GDP complex and induces the exchange of GDP to GTP. It remains bound to the aminoacyl-tRNA.EF-Tu.GTP complex up to the GTP hydrolysis stage on the ribosome. The protein is Elongation factor Ts of Geobacillus thermodenitrificans (strain NG80-2).